Here is a 693-residue protein sequence, read N- to C-terminus: Protein-glutamine gamma-glutamyltransferase E (693 aa).

Y111 is modified (phosphotyrosine). T112 carries the phosphothreonine modification. 4 residues coordinate Ca(2+): A222, N225, N227, and D228. The active site involves C273. The Ca(2+) site is built by D302, D304, N306, S308, and D325. Catalysis depends on residues H331 and D354. Ca(2+) contacts are provided by N394, T416, E444, and E449. A disordered region spans residues K455–S482.

The protein belongs to the transglutaminase superfamily. Transglutaminase family. Consists of two polypeptide chains, which are synthesized as a precursor form of a single polypeptide. It depends on Ca(2+) as a cofactor. In terms of processing, activated by proteolytic processing. In vitro activation is commonly achieved by cleavage with dispase, a neutral bacterial protease. Physiological activation may be catalyzed by CTSL and, to a lesser extent, by CTSS.

The protein resides in the cytoplasm. The enzyme catalyses L-glutaminyl-[protein] + L-lysyl-[protein] = [protein]-L-lysyl-N(6)-5-L-glutamyl-[protein] + NH4(+). In terms of biological role, catalyzes the calcium-dependent formation of isopeptide cross-links between glutamine and lysine residues in various proteins, as well as the conjugation of polyamines to proteins. Involved in the formation of the cornified envelope (CE), a specialized component consisting of covalent cross-links of proteins beneath the plasma membrane of terminally differentiated keratinocytes. Catalyzes small proline-rich proteins and LOR cross-linking to form small interchain oligomers, which are further cross-linked by TGM1 onto the growing CE scaffold. In hair follicles, involved in cross-linking structural proteins to hardening the inner root sheath. The sequence is that of Protein-glutamine gamma-glutamyltransferase E (Tgm3) from Rattus norvegicus (Rat).